The chain runs to 29 residues: Cytochrome b6-f complex subunit 8 (29 aa).

A helical membrane pass occupies residues 3–23 (ILTLGWVSVLTLFTYSIAMVV).

It belongs to the PetN family. The 4 large subunits of the cytochrome b6-f complex are cytochrome b6, subunit IV (17 kDa polypeptide, PetD), cytochrome f and the Rieske protein, while the 4 small subunits are PetG, PetL, PetM and PetN. The complex functions as a dimer.

It is found in the cellular thylakoid membrane. Component of the cytochrome b6-f complex, which mediates electron transfer between photosystem II (PSII) and photosystem I (PSI), cyclic electron flow around PSI, and state transitions. This is Cytochrome b6-f complex subunit 8 from Acaryochloris marina (strain MBIC 11017).